Here is an 811-residue protein sequence, read N- to C-terminus: MLLPTTIQPQTARKSQLPRGNSCLVGLHIASPQLLRVQPLVRTEPQSCFLSDLCQPPAQGFVQRPLPALQVVPAKRVPAPKAPDEQGSMLTPLSASDPLAVTSLSSSSAHPFISNLHTRHTEKLKKSLKVKTRSGRVSRPPKYKAKDYKFIKTEDLADGHLSDSDDYSELCVEEDEDQRERHALFDLSSCSLRPKSFKCQTCEKSYIGKGGLARHFKLNPGHGQLDPEMVLSEKASGSTLRGCTEERTLSLTSLGLSMPADPCEGGARSCLVTESARGGLQNGQSVDVEETLPSEPENGALLRSERYQGPRRRACSETLAESRTAVLQQRRAAQLPGGPAAAGEQRASPSKARLKEFLQQCDREDLVELALPQLAQVVTVYEFLLMKVEKDHLAKPFFPAIYKEFEELHKMVKKMCQDYLSSSGLCSQETLEINNDKVAESLGITEFLRKKEIHPDNLGPKHLSRDMDGEQLEGASSEKREREAAEEGLASVKRPRREALSNDTTESLAANSRGREKPRPLHALAAGFSPPVNVTVSPRSEESHTTTVSGGNGSVFQAGPQLQALANLEARRGSIGAALSSRDVSGLPVYAQSGEPRRLTQAQVAAFPGENALEHSSDQDTWDSLRSPGFCSPLSSGGGAESLPPGGPGHAEAGHLGKVCDFHLNHQQPSPTSVLPTEVAAPPLEKILSVDSVAVDCAYRTVPKPGPQPGPHGSLLTEGCLRSLSGDLNRFPCGMEVHSGQRELESVVAVGEAMAFEISNGSHELLSQGQKQIFIQTSDGLILSPPGTIVSQEEDIVTVTDAEGRACGWAR.

The C2H2-type zinc-finger motif lies at 197–222 (FKCQTCEKSYIGKGGLARHFKLNPGH). Disordered stretches follow at residues 329–349 (QRRA…RASP), 455–555 (PDNL…NGSV), and 612–654 (ALEH…AEAG). Residues 476-485 (SSEKREREAA) show a composition bias toward basic and acidic residues. Polar residues predominate over residues 501 to 510 (SNDTTESLAA).

This chain is Zinc finger protein 839 (ZNF839), found in Homo sapiens (Human).